A 547-amino-acid polypeptide reads, in one-letter code: Chaperonin GroEL (547 aa).

Residues 30-33 (TLGP), Lys51, 87-91 (DGTTT), Gly415, and Asp495 contribute to the ATP site.

This sequence belongs to the chaperonin (HSP60) family. In terms of assembly, forms a cylinder of 14 subunits composed of two heptameric rings stacked back-to-back. Interacts with the co-chaperonin GroES.

It localises to the cytoplasm. It catalyses the reaction ATP + H2O + a folded polypeptide = ADP + phosphate + an unfolded polypeptide.. In terms of biological role, together with its co-chaperonin GroES, plays an essential role in assisting protein folding. The GroEL-GroES system forms a nano-cage that allows encapsulation of the non-native substrate proteins and provides a physical environment optimized to promote and accelerate protein folding. The chain is Chaperonin GroEL from Bartonella quintana (strain Toulouse) (Rochalimaea quintana).